A 599-amino-acid polypeptide reads, in one-letter code: Aspartate--tRNA ligase (599 aa).

E175 contacts L-aspartate. The segment at Q199–K202 is aspartate. L-aspartate is bound by residues R221 and H446. R221–E223 contacts ATP. ATP is bound at residue E480. Position 487 (R487) interacts with L-aspartate. G532 to R535 lines the ATP pocket.

It belongs to the class-II aminoacyl-tRNA synthetase family. Type 1 subfamily. As to quaternary structure, homodimer.

It is found in the cytoplasm. The catalysed reaction is tRNA(Asp) + L-aspartate + ATP = L-aspartyl-tRNA(Asp) + AMP + diphosphate. Catalyzes the attachment of L-aspartate to tRNA(Asp) in a two-step reaction: L-aspartate is first activated by ATP to form Asp-AMP and then transferred to the acceptor end of tRNA(Asp). This chain is Aspartate--tRNA ligase, found in Streptomyces griseus subsp. griseus (strain JCM 4626 / CBS 651.72 / NBRC 13350 / KCC S-0626 / ISP 5235).